The primary structure comprises 946 residues: Probable inactive ATP-dependent zinc metalloprotease FTSHI 1, chloroplastic (946 aa).

A chloroplast-targeting transit peptide spans 1-54 (MASIDNVFSLGTRFSIPENPKRSILKHATTSSFSARTQTRWRAPILRRSFTVLC). Helical transmembrane passes span 289–309 (AVIA…VFAV), 320–340 (VVWP…LGVL), and 369–389 (VASS…MVLL). An ATP-binding site is contributed by 470–477 (GPPGCGKT).

This sequence in the N-terminal section; belongs to the AAA ATPase family. The protein in the C-terminal section; belongs to the peptidase M41 family. As to quaternary structure, oligomer.

The protein resides in the plastid. It is found in the chloroplast inner membrane. In terms of biological role, functions in chloroplast biogenesis and chloroplast division. Required for plastid development during embryogenesis. Might be involved in chaperone functions or play a structural role in the thylakoid FtsH complex. This Arabidopsis thaliana (Mouse-ear cress) protein is Probable inactive ATP-dependent zinc metalloprotease FTSHI 1, chloroplastic.